The primary structure comprises 662 residues: MGAYLSHPKTDKTSTDQFNELLAVGASSMQGWRNSQEDAHNSILNFDNNTSFFAVYDGHGGAEVAQYCADKLPHFLKNLETYKNGQFEVALKEAFLGFDKTLLDPSIVSILKILAGEHNFVDAEADDYEEEDLAELQEESNLPLNEVLEKYKGLPQKKDLDLKSSDHKENFKMRSPYFRGRRAAALAAEATNKAVMDPSAKPDGSSTSAAAAAAALSADGVANSRNPSNVVNPMAGADSNTTTSINDLSTKNAALKDDSVNDQNEGSNGTDFKHTLVSSSNKKLFATGSNDMTELNQSSKNEFTNSSTSKEFERNINSSQDDEFTDDDADYEENDNVKSPDTSSAESSDCTENDDDGDEDGNEDSDEEETDEDQMANDNFCANMIEEPGKDSGCTAVVCLLQGRDLYVANAGDSRCVISRSGQAIEMSIDHKPEDDEEASRIIKAGGRVTLDGRVNGGLNLSRALGDHAYKTNVTLPAEEQMISALPDIKKLIITPEDEFMVLACDGIWNYMSSEEVVEFVRCRLKDNKKLSTICEELFDNCLAPNTMGDGTGCDNMTAVIVQFKKKLQELQSTIPPNQTEDKLLKTSENVSHSLNDQSASKRCASQNADADDEILEKNNSKRLKTDLEQENIKDRTPSPSNQNEDPTQKAIKEVTIIVSSS.

Residues Ala23–Phe564 form the PPM-type phosphatase domain. Positions 57 and 58 each coordinate Mn(2+). Disordered stretches follow at residues Asp219–Thr275 and Gly288–Gln374. Polar residues-rich tracts occupy residues Asp238–Asn252, Asn261–Thr275, and Gly288–Ser319. Phosphoserine occurs at positions 289 and 306. Over residues Gln320 to Asn334 the composition is skewed to acidic residues. Polar residues predominate over residues Val337–Ser347. The span at Asp349–Gln374 shows a compositional bias: acidic residues. Residues Asp506 and Asp555 each contribute to the Mn(2+) site. The span at Val591–Ala609 shows a compositional bias: polar residues. The interval Val591–Ser662 is disordered. Ser592, Ser594, and Ser599 each carry phosphoserine. Basic and acidic residues predominate over residues Leu616–Thr637. Thr637 carries the phosphothreonine modification. Phosphoserine is present on residues Ser639 and Ser641.

The protein belongs to the PP2C family. The cofactor is Mg(2+). It depends on Mn(2+) as a cofactor.

It catalyses the reaction O-phospho-L-seryl-[protein] + H2O = L-seryl-[protein] + phosphate. The enzyme catalyses O-phospho-L-threonyl-[protein] + H2O = L-threonyl-[protein] + phosphate. This Drosophila melanogaster (Fruit fly) protein is Probable protein phosphatase CG10417.